The following is a 205-amino-acid chain: Adenylyl-sulfate kinase (205 aa).

31–38 (GLSGAGKS) serves as a coordination point for ATP. Ser-105 acts as the Phosphoserine intermediate in catalysis.

Belongs to the APS kinase family.

It carries out the reaction adenosine 5'-phosphosulfate + ATP = 3'-phosphoadenylyl sulfate + ADP + H(+). Its pathway is sulfur metabolism; hydrogen sulfide biosynthesis; sulfite from sulfate: step 2/3. In terms of biological role, catalyzes the synthesis of activated sulfate. The protein is Adenylyl-sulfate kinase of Shewanella baltica (strain OS155 / ATCC BAA-1091).